The chain runs to 174 residues: Alkyl hydroperoxide reductase AhpD (174 aa).

Cys130 functions as the Proton donor in the catalytic mechanism. The cysteines at positions 130 and 133 are disulfide-linked. Catalysis depends on Cys133, which acts as the Cysteine sulfenic acid (-SOH) intermediate.

Belongs to the AhpD family. In terms of assembly, homotrimer.

It catalyses the reaction N(6)-[(R)-dihydrolipoyl]-L-lysyl-[lipoyl-carrier protein] + a hydroperoxide = N(6)-[(R)-lipoyl]-L-lysyl-[lipoyl-carrier protein] + an alcohol + H2O. Antioxidant protein with alkyl hydroperoxidase activity. Required for the reduction of the AhpC active site cysteine residues and for the regeneration of the AhpC enzyme activity. The chain is Alkyl hydroperoxide reductase AhpD from Corynebacterium kroppenstedtii (strain DSM 44385 / JCM 11950 / CIP 105744 / CCUG 35717).